The following is a 319-amino-acid chain: Probable NAD(P)H-dependent D-xylose reductase xyl1 (319 aa).

Tyrosine 50 serves as the catalytic Proton donor. Histidine 112 provides a ligand contact to substrate. NAD(+) contacts are provided by residues 166-167, 215-224, and 271-281; these read SN, SSFGPLSFLE, and KSNNPTRLSQN.

It belongs to the aldo/keto reductase family.

The enzyme catalyses xylitol + NAD(+) = D-xylose + NADH + H(+). It catalyses the reaction xylitol + NADP(+) = D-xylose + NADPH + H(+). It functions in the pathway carbohydrate metabolism; D-xylose degradation. Functionally, catalyzes the initial reaction in the xylose utilization pathway by reducing D-xylose into xylitol. Xylose is a major component of hemicelluloses such as xylan. Most fungi utilize D-xylose via three enzymatic reactions, xylose reductase (XR), xylitol dehydrogenase (XDH), and xylulokinase, to form xylulose 5-phosphate, which enters pentose phosphate pathway. The sequence is that of Probable NAD(P)H-dependent D-xylose reductase xyl1 (xyl1) from Aspergillus oryzae (strain ATCC 42149 / RIB 40) (Yellow koji mold).